Reading from the N-terminus, the 454-residue chain is N-lysine methyltransferase setd6 (454 aa).

One can recognise an SET domain in the interval 38–265 (PKVYISTEGT…AGQELFNTYG (228 aa)).

This sequence belongs to the class V-like SAM-binding methyltransferase superfamily. Histone-lysine methyltransferase family. SETD6 subfamily.

It localises to the nucleus. Protein-lysine N-methyltransferase. This Xenopus tropicalis (Western clawed frog) protein is N-lysine methyltransferase setd6 (setd6).